The chain runs to 117 residues: Large ribosomal subunit protein uL18 (117 aa).

Belongs to the universal ribosomal protein uL18 family. Part of the 50S ribosomal subunit; part of the 5S rRNA/L5/L18/L25 subcomplex. Contacts the 5S and 23S rRNAs.

Functionally, this is one of the proteins that bind and probably mediate the attachment of the 5S RNA into the large ribosomal subunit, where it forms part of the central protuberance. This chain is Large ribosomal subunit protein uL18, found in Vibrio proteolyticus (Aeromonas proteolytica).